A 342-amino-acid polypeptide reads, in one-letter code: MQFIDQAKIEVEAGKGGDGIVAFRREKYVPTGGPSGGNGGRGGSVFFVADENLQTLLDFRYNHRFQAEKGTRGGPNNCTGAGGKDLIIEVPCGTTIYDAETGELLGDLTEPQQTLLIAQGGKGGLGNQHFLSNRNRAPEYALPGLPGEIKQLRLELKLLAEVGIIGLPNAGKSTLISSLSAARPKIADYPFTTLIPNLGVVRKPTGDGTVFADIPGLIAGASHGAGLGHDFLRHIERTRVLLHLIDATSDDVIRDYNTIKEELQAYGQGLAERPQILALNKIDAVDRETVDLEALATQLNHLSYAPVFIISAVTRTGLEPMLQEIWGILDQMKVPEEVEALR.

One can recognise an Obg domain in the interval 1–159 (MQFIDQAKIE…KQLRLELKLL (159 aa)). Residues 160–330 (AEVGIIGLPN…MLQEIWGILD (171 aa)) enclose the OBG-type G domain. GTP contacts are provided by residues 166–173 (GLPNAGKS), 191–195 (FTTLI), 213–216 (DIPG), 280–283 (NKID), and 311–313 (SAV). Mg(2+) is bound by residues S173 and T193.

It belongs to the TRAFAC class OBG-HflX-like GTPase superfamily. OBG GTPase family. As to quaternary structure, monomer. Mg(2+) serves as cofactor.

Its subcellular location is the cytoplasm. An essential GTPase which binds GTP, GDP and possibly (p)ppGpp with moderate affinity, with high nucleotide exchange rates and a fairly low GTP hydrolysis rate. Plays a role in control of the cell cycle, stress response, ribosome biogenesis and in those bacteria that undergo differentiation, in morphogenesis control. The protein is GTPase Obg of Nostoc punctiforme (strain ATCC 29133 / PCC 73102).